The sequence spans 302 residues: Uricase (302 aa).

The residue at position 2 (Ser2) is an N-acetylserine. Residues Lys11 and Thr58 each act as charge relay system in the active site. 5-hydroxyisourate contacts are provided by Thr58, Asp59, Phe160, Arg177, Val228, Gln229, and Asn255. Thr58 contacts O2. Positions 58, 59, 160, 177, 228, 229, and 255 each coordinate urate. O2 is bound at residue Asn255. Residue His257 is the Charge relay system of the active site. The Microbody targeting signal signature appears at 300–302; it reads SKL.

It belongs to the uricase family. Homotetramer.

Its subcellular location is the peroxisome. The enzyme catalyses urate + O2 + H2O = 5-hydroxyisourate + H2O2. It participates in purine metabolism; urate degradation; (S)-allantoin from urate: step 1/3. 8-Azaxanthine is one of the most potent competitive inhibitors of uricase activity. Hypoxanthine has only a small inhibitor effect, and caffeine has no effect at all. Azide not only competes with dioxygen but also competes with the substrate for its enzymatic site. In terms of biological role, urate oxidase is a cofactorless enzyme involved in the metabolism of purines. Catalyzes, in the presence of molecular oxygen, the hydroxylation of uric acid to metastable 5-hydroxyisourate (5-HIU) which is further degraded to allantoin. The chain is Uricase from Aspergillus flavus.